A 584-amino-acid chain; its full sequence is ATP-dependent lipid A-core flippase 2 (584 aa).

The next 6 helical transmembrane spans lie at 32–52 (IFIALAGLCLFSFVDAGMIYF), 68–88 (TLQLGALLVVAIFFLRGIASF), 146–166 (SAVVIAIRESVIILVLFSMMV), 167–187 (YNSWQLTAIFLVIVPIIALII), 254–274 (AISNPVIQLIASFAIAAVLLL), and 280–300 (VLNQLTPGSFTLILIAMGSLL). Positions 33–315 (FIALAGLCLF…LSNINQQLQK (283 aa)) constitute an ABC transmembrane type-1 domain. One can recognise an ABC transporter domain in the interval 347–583 (IRFNNFSFTY…AGYYQSLYQS (237 aa)). 381-388 (GESGSGKS) provides a ligand contact to ATP.

Belongs to the ABC transporter superfamily. Lipid exporter (TC 3.A.1.106) family. Homodimer.

Its subcellular location is the cell inner membrane. The enzyme catalyses ATP + H2O + lipid A-core oligosaccharideSide 1 = ADP + phosphate + lipid A-core oligosaccharideSide 2.. Its function is as follows. Involved in lipopolysaccharide (LPS) biosynthesis. Translocates lipid A-core from the inner to the outer leaflet of the inner membrane. Transmembrane domains (TMD) form a pore in the inner membrane and the ATP-binding domain (NBD) is responsible for energy generation. The sequence is that of ATP-dependent lipid A-core flippase 2 from Colwellia psychrerythraea (strain 34H / ATCC BAA-681) (Vibrio psychroerythus).